Consider the following 376-residue polypeptide: N-acetyldiaminopimelate deacetylase (376 aa).

The active site involves D69. E128 (proton acceptor) is an active-site residue.

This sequence belongs to the peptidase M20A family. N-acetyldiaminopimelate deacetylase subfamily.

It catalyses the reaction N-acetyl-(2S,6S)-2,6-diaminopimelate + H2O = (2S,6S)-2,6-diaminopimelate + acetate. The protein operates within amino-acid biosynthesis; L-lysine biosynthesis via DAP pathway; LL-2,6-diaminopimelate from (S)-tetrahydrodipicolinate (acetylase route): step 3/3. Functionally, catalyzes the conversion of N-acetyl-diaminopimelate to diaminopimelate and acetate. In Streptococcus pneumoniae (strain CGSP14), this protein is N-acetyldiaminopimelate deacetylase.